The chain runs to 520 residues: UDP-N-acetylmuramoyl-L-alanyl-D-glutamate--2,6-diaminopimelate ligase (520 aa).

L48 contacts UDP-N-acetyl-alpha-D-muramoyl-L-alanyl-D-glutamate. 134–140 (GTSGKTT) lines the ATP pocket. Residues 176 to 177 (TT), S203, and R211 each bind UDP-N-acetyl-alpha-D-muramoyl-L-alanyl-D-glutamate. K243 bears the N6-carboxylysine mark. Meso-2,6-diaminopimelate-binding positions include R405, 429-432 (DNPR), G483, and E487. A Meso-diaminopimelate recognition motif motif is present at residues 429-432 (DNPR).

The protein belongs to the MurCDEF family. MurE subfamily. Requires Mg(2+) as cofactor. In terms of processing, carboxylation is probably crucial for Mg(2+) binding and, consequently, for the gamma-phosphate positioning of ATP.

It is found in the cytoplasm. It carries out the reaction UDP-N-acetyl-alpha-D-muramoyl-L-alanyl-D-glutamate + meso-2,6-diaminopimelate + ATP = UDP-N-acetyl-alpha-D-muramoyl-L-alanyl-gamma-D-glutamyl-meso-2,6-diaminopimelate + ADP + phosphate + H(+). The protein operates within cell wall biogenesis; peptidoglycan biosynthesis. In terms of biological role, catalyzes the addition of meso-diaminopimelic acid to the nucleotide precursor UDP-N-acetylmuramoyl-L-alanyl-D-glutamate (UMAG) in the biosynthesis of bacterial cell-wall peptidoglycan. The sequence is that of UDP-N-acetylmuramoyl-L-alanyl-D-glutamate--2,6-diaminopimelate ligase from Mycobacterium avium (strain 104).